The primary structure comprises 182 residues: Adenine phosphoribosyltransferase (182 aa).

This sequence belongs to the purine/pyrimidine phosphoribosyltransferase family. In terms of assembly, homodimer.

It is found in the cytoplasm. The catalysed reaction is AMP + diphosphate = 5-phospho-alpha-D-ribose 1-diphosphate + adenine. The protein operates within purine metabolism; AMP biosynthesis via salvage pathway; AMP from adenine: step 1/1. In terms of biological role, catalyzes a salvage reaction resulting in the formation of AMP, that is energically less costly than de novo synthesis. This Pseudomonas putida (strain GB-1) protein is Adenine phosphoribosyltransferase.